The chain runs to 842 residues: G-type lectin S-receptor-like serine/threonine-protein kinase At1g11330 (842 aa).

Positions 1–29 (MVVSVTIRRRFVLLLLACTCLLSRRLCFG) are cleaved as a signal peptide. The Extracellular portion of the chain corresponds to 30–444 (EDRITFSSPI…AHSELKTHSN (415 aa)). One can recognise a Bulb-type lectin domain in the interval 32–157 (RITFSSPIKD…RNNGEILWES (126 aa)). N-linked (GlcNAc...) asparagine glycans are attached at residues asparagine 63, asparagine 94, asparagine 122, asparagine 130, asparagine 196, and asparagine 260. The region spanning 294–330 (PYTDCDAYGRCGRFGSCHAGENPPCKCVKGFVPKNNT) is the EGF-like; atypical domain. Cystine bridges form between cysteine 298-cysteine 310 and cysteine 304-cysteine 318. 4 N-linked (GlcNAc...) asparagine glycosylation sites follow: asparagine 328, asparagine 336, asparagine 354, and asparagine 396. The PAN domain occupies 349–435 (CERQRNVSNG…SGIDLFIRVA (87 aa)). 2 disulfide bridges follow: cysteine 389–cysteine 410 and cysteine 393–cysteine 399. A helical transmembrane segment spans residues 445-465 (LAVMIAAPVIGVMLIAAVCVL). Topologically, residues 466-842 (LACRKYKKRP…DVSLTAVTGR (377 aa)) are cytoplasmic. One can recognise a Protein kinase domain in the interval 524–810 (FSLRNKLGQG…SLADPKQPAF (287 aa)). ATP contacts are provided by residues 530–538 (LGQGGFGPV) and lysine 552. Serine 558 and serine 573 each carry phosphoserine. The interval 613–630 (MKQKILDWKTRFNIMEGI) is caM-binding. Aspartate 649 serves as the catalytic Proton acceptor. A phosphoserine mark is found at serine 653 and serine 666. Phosphothreonine is present on threonine 683. Residues serine 726, serine 727, serine 821, and serine 830 each carry the phosphoserine modification. The interval 814–842 (RGASEAESSDQSSQKVSINDVSLTAVTGR) is disordered. Over residues 818-827 (EAESSDQSSQ) the composition is skewed to low complexity. The span at 828–842 (KVSINDVSLTAVTGR) shows a compositional bias: polar residues. Threonine 837 bears the Phosphothreonine mark.

The protein belongs to the protein kinase superfamily. Ser/Thr protein kinase family.

Its subcellular location is the cell membrane. The catalysed reaction is L-seryl-[protein] + ATP = O-phospho-L-seryl-[protein] + ADP + H(+). The enzyme catalyses L-threonyl-[protein] + ATP = O-phospho-L-threonyl-[protein] + ADP + H(+). The chain is G-type lectin S-receptor-like serine/threonine-protein kinase At1g11330 from Arabidopsis thaliana (Mouse-ear cress).